A 267-amino-acid chain; its full sequence is Indole-3-glycerol phosphate synthase (267 aa).

It belongs to the TrpC family.

It carries out the reaction 1-(2-carboxyphenylamino)-1-deoxy-D-ribulose 5-phosphate + H(+) = (1S,2R)-1-C-(indol-3-yl)glycerol 3-phosphate + CO2 + H2O. Its pathway is amino-acid biosynthesis; L-tryptophan biosynthesis; L-tryptophan from chorismate: step 4/5. This chain is Indole-3-glycerol phosphate synthase, found in Polynucleobacter asymbioticus (strain DSM 18221 / CIP 109841 / QLW-P1DMWA-1) (Polynucleobacter necessarius subsp. asymbioticus).